Here is a 91-residue protein sequence, read N- to C-terminus: Large ribosomal subunit protein bL27 (91 aa).

This sequence belongs to the bacterial ribosomal protein bL27 family.

The sequence is that of Large ribosomal subunit protein bL27 from Pseudomonas savastanoi pv. phaseolicola (strain 1448A / Race 6) (Pseudomonas syringae pv. phaseolicola (strain 1448A / Race 6)).